The following is a 305-amino-acid chain: Outer membrane protein assembly factor BamD (305 aa).

Residues 1–24 (MLRIFQGRPAVTIAAVLVAASVAG) form the signal peptide. C25 carries the N-palmitoyl cysteine lipid modification. C25 carries the S-diacylglycerol cysteine lipid modification. TPR repeat units follow at residues 41 to 74 (VELLYSTGADRLDRGNWNEAVDYFREVERQHPYS), 78 to 111 (RRSILMTGYAHYMGNQYAEAIGDADRFISLYPGN), 113 to 136 (SAQYAFYLKAICYFEQIVDVNRDQ), and 174 to 207 (AGKEMAIGRWYLKNGQTLAAIGRFKAVIERHQTT).

This sequence belongs to the BamD family. In terms of assembly, part of the Bam complex.

Its subcellular location is the cell outer membrane. In terms of biological role, part of the outer membrane protein assembly complex, which is involved in assembly and insertion of beta-barrel proteins into the outer membrane. This Caulobacter vibrioides (strain ATCC 19089 / CIP 103742 / CB 15) (Caulobacter crescentus) protein is Outer membrane protein assembly factor BamD.